The sequence spans 241 residues: MWCYRGGSISTEPRINDRIRVPEVRLVGPSGEQVGIVPLAKALELAQEYDLDLVEVAASARPPVCKLMDYGKFKYESAMKAREARKNQAHTVIKEMKLRPKIDPHDYDTKKGHVVRFLKQGDKVKITIMFRGREQSRPELGYRLLQRLATDVEDLGFVESSPKQDGRNMIMVLGPHKKKTEAMAEAREAQAARKAEAKANPGRSQNAADEDIPEGELPEGEVPEAETTEAAEAPAEASTEA.

Positions 178-241 (KKTEAMAEAR…EAPAEASTEA (64 aa)) are disordered. A compositionally biased stretch (basic and acidic residues) spans 180–197 (TEAMAEAREAQAARKAEA). Residues 208 to 229 (ADEDIPEGELPEGEVPEAETTE) show a composition bias toward acidic residues. Residues 230–241 (AAEAPAEASTEA) show a composition bias toward low complexity.

This sequence belongs to the IF-3 family. Monomer.

It localises to the cytoplasm. Its function is as follows. IF-3 binds to the 30S ribosomal subunit and shifts the equilibrium between 70S ribosomes and their 50S and 30S subunits in favor of the free subunits, thus enhancing the availability of 30S subunits on which protein synthesis initiation begins. This Streptomyces avermitilis (strain ATCC 31267 / DSM 46492 / JCM 5070 / NBRC 14893 / NCIMB 12804 / NRRL 8165 / MA-4680) protein is Translation initiation factor IF-3.